Reading from the N-terminus, the 268-residue chain is 26S proteasome regulatory subunit RPN10 (268 aa).

Residues 5 to 190 (ATVLVIDNSE…LYENIASSPI (186 aa)) enclose the VWFA domain. The 20-residue stretch at 223–242 (SMDPELAMALRLSMEEEQQR) folds into the UIM domain. Residues 226-268 (PELAMALRLSMEEEQQRQERLRQQQQQQDQPEQSEQPEQHQDK) form a disordered region. The segment covering 235–247 (SMEEEQQRQERLR) has biased composition (basic and acidic residues). Over residues 248-261 (QQQQQQDQPEQSEQ) the composition is skewed to low complexity.

The protein belongs to the proteasome subunit S5A family. In terms of assembly, the 26S proteasome is composed of a core protease, known as the 20S proteasome, capped at one or both ends by the 19S regulatory complex (RC). The RC is composed of at least 18 different subunits in two subcomplexes, the base and the lid, which form the portions proximal and distal to the 20S proteolytic core, respectively. Ubiquitinated, leading to its degradation. Ubiquitination is promoted by HUL5.

In terms of biological role, multiubiquitin binding protein. This Saccharomyces cerevisiae (strain ATCC 204508 / S288c) (Baker's yeast) protein is 26S proteasome regulatory subunit RPN10 (RPN10).